We begin with the raw amino-acid sequence, 291 residues long: ATP synthase gamma chain (291 aa).

It belongs to the ATPase gamma chain family. F-type ATPases have 2 components, CF(1) - the catalytic core - and CF(0) - the membrane proton channel. CF(1) has five subunits: alpha(3), beta(3), gamma(1), delta(1), epsilon(1). CF(0) has three main subunits: a, b and c.

It localises to the cell inner membrane. Its function is as follows. Produces ATP from ADP in the presence of a proton gradient across the membrane. The gamma chain is believed to be important in regulating ATPase activity and the flow of protons through the CF(0) complex. The chain is ATP synthase gamma chain from Burkholderia pseudomallei (strain 1106a).